The sequence spans 616 residues: Proline--tRNA ligase (616 aa).

Belongs to the class-II aminoacyl-tRNA synthetase family. ProS type 1 subfamily. Homodimer.

Its subcellular location is the cytoplasm. It carries out the reaction tRNA(Pro) + L-proline + ATP = L-prolyl-tRNA(Pro) + AMP + diphosphate. Its function is as follows. Catalyzes the attachment of proline to tRNA(Pro) in a two-step reaction: proline is first activated by ATP to form Pro-AMP and then transferred to the acceptor end of tRNA(Pro). As ProRS can inadvertently accommodate and process non-cognate amino acids such as alanine and cysteine, to avoid such errors it has two additional distinct editing activities against alanine. One activity is designated as 'pretransfer' editing and involves the tRNA(Pro)-independent hydrolysis of activated Ala-AMP. The other activity is designated 'posttransfer' editing and involves deacylation of mischarged Ala-tRNA(Pro). The misacylated Cys-tRNA(Pro) is not edited by ProRS. This Lactococcus lactis subsp. cremoris (strain MG1363) protein is Proline--tRNA ligase.